Reading from the N-terminus, the 262-residue chain is Proline-rich protein 23C (262 aa).

2 disordered regions span residues 1–52 (MGSR…AGTP) and 225–262 (VPSS…LFQE). The span at 226 to 242 (PSSPLQPLPPSPSPGPH) shows a compositional bias: pro residues. Positions 243-252 (ARPELPERPP) are enriched in basic and acidic residues. The span at 253–262 (CKVRRRLFQE) shows a compositional bias: basic residues.

This sequence belongs to the PRR23 family.

The sequence is that of Proline-rich protein 23C (PRR23C) from Homo sapiens (Human).